The following is a 241-amino-acid chain: Uridylate kinase (241 aa).

ATP is bound by residues 10–13 (KLSG), glycine 53, and arginine 57. UMP is bound by residues aspartate 72 and 133-140 (AGSPYFST). Residues asparagine 161, tyrosine 167, and aspartate 170 each contribute to the ATP site.

Belongs to the UMP kinase family. Homohexamer.

It localises to the cytoplasm. It carries out the reaction UMP + ATP = UDP + ADP. Its pathway is pyrimidine metabolism; CTP biosynthesis via de novo pathway; UDP from UMP (UMPK route): step 1/1. Inhibited by UTP. Functionally, catalyzes the reversible phosphorylation of UMP to UDP. The sequence is that of Uridylate kinase from Onion yellows phytoplasma (strain OY-M).